A 117-amino-acid polypeptide reads, in one-letter code: Large ribosomal subunit protein bL20 (117 aa).

The protein belongs to the bacterial ribosomal protein bL20 family.

Its function is as follows. Binds directly to 23S ribosomal RNA and is necessary for the in vitro assembly process of the 50S ribosomal subunit. It is not involved in the protein synthesizing functions of that subunit. The sequence is that of Large ribosomal subunit protein bL20 from Brachyspira hyodysenteriae (strain ATCC 49526 / WA1).